The following is an 852-amino-acid chain: Tiger protein I3 (852 aa).

An N-terminal signal peptide occupies residues 1–18 (MKILLFFILFYLFSFSIS). Residues 19–830 (YDEVIPLGYE…DVHQYSDARN (812 aa)) are Extracellular-facing. N-linked (GlcNAc...) asparagine glycosylation is found at Asn31, Asn47, Asn67, Asn97, Asn129, Asn201, Asn215, Asn228, Asn260, Asn323, Asn352, Asn356, Asn404, Asn441, Asn476, Asn483, Asn501, Asn512, Asn574, Asn592, Asn635, Asn658, Asn661, Asn679, Asn680, Asn723, Asn757, Asn761, Asn773, Asn785, and Asn800. Residues 290 to 367 (IPSIVNSIPK…SSPIAVSIND (78 aa)) form the IPT/TIG domain. A helical transmembrane segment spans residues 831-851 (IFQNLLLSILIIIIISLFISN). Position 852 (Ile852) is a topological domain, cytoplasmic.

It is found in the membrane. The chain is Tiger protein I3 (tgrI3) from Dictyostelium discoideum (Social amoeba).